The sequence spans 482 residues: MEKDIKRQIQILEIITSEEKWFTTIEISKILRCCNKTIMKDISFIKDFLPEDWHIKIKKGKGVRIYLPYNKHRNEITFLLFRESLTFRILQHLFERETKTIATLAERLYIQVPSILPALKRVENYLKKFGLKLRKKPLRLEGDEVRIMIMYLDLYLKSYNDTEWPFEKLKKEVIFQYLGTLEESLGISLHVVSKRHLSFFIAILLKRKQQGYKVQLNRKFLYFNTETPDYVKIGRIFEKLEREFGVSLTVQDKILLTISIKSSKYVYKDINKEKEESVQYFKEGNLSIYELVKDFINSLEEKLKVDLISDEEFIFALVDYFKRTIYHLQYLCMFERPQKQTIQYMQTEHSETFSAVKEVYTEFVKKNEIADYVSVEEIAKVTMYIEASRLRYTSNYKKVLLVTGESESWAEYLAATLAKRFGDKIQISTVFFAKKSDHDVNADFIISTIPLDLGSTPIICINSIPTERDYTNIQYYLDLQDG.

PRD domains are found at residues 165-270 (PFEK…YKDI) and 283-395 (EGNL…YTSN).

This sequence belongs to the AtxA/AcpA family.

Functionally, acpB and AcpA regulate cap gene expression and capsule synthesis. This chain is Capsule synthesis positive regulator AcpB (acpB), found in Bacillus anthracis.